A 131-amino-acid chain; its full sequence is MNPSSTKVSWATVTLLLLLLLLPPALLSPGAAAQPLPDCCRQKTCSCRLYELLHGAGNHAAGILTLGKRRPGPPGLQGRLQRLLQASGNHAAGILTMGRRAGAEPALRPCSGRRCPSEAASSVAPGGRSGV.

Q34 is subject to Pyrrolidone carboxylic acid. 2 disulfides stabilise this stretch: C39/C45 and C40/C47. At L66 the chain carries Leucine amide. Residues 104-131 form a disordered region; sequence EPALRPCSGRRCPSEAASSVAPGGRSGV.

This sequence belongs to the orexin family.

It localises to the rough endoplasmic reticulum. It is found in the cytoplasmic vesicle. The protein localises to the synapse. Functionally, neuropeptides that play a significant role in the regulation of food intake and sleep-wakefulness, possibly by coordinating the complex behavioral and physiologic responses of these complementary homeostatic functions. A broader role in the homeostatic regulation of energy metabolism, autonomic function, hormonal balance and the regulation of body fluids, is also suggested. Binds to orexin receptors HCRTR1/OX1R and HCRTR2/OX2R with a high affinity. Stimulates food intake. Modulates pituitary luteinizing hormone secretion in an ovarian steroid-dependent manner. Its function is as follows. Binds to orexin receptor HCRTR2/OX2R only. Stimulates food intake. Modulates pituitary luteinizing hormone secretion in an ovarian steroid-dependent manner. This Bos taurus (Bovine) protein is Hypocretin neuropeptide precursor (HCRT).